The chain runs to 367 residues: tRNA uridine(34) hydroxylase (367 aa).

Residues 159–249 (EDKNSIVVDV…GIISYAHEIS (91 aa)) enclose the Rhodanese domain. Cys-213 (cysteine persulfide intermediate) is an active-site residue.

Belongs to the TrhO family.

It catalyses the reaction uridine(34) in tRNA + AH2 + O2 = 5-hydroxyuridine(34) in tRNA + A + H2O. Catalyzes oxygen-dependent 5-hydroxyuridine (ho5U) modification at position 34 in tRNAs. The protein is tRNA uridine(34) hydroxylase of Leptospira borgpetersenii serovar Hardjo-bovis (strain L550).